We begin with the raw amino-acid sequence, 321 residues long: Lipoyl synthase (321 aa).

Residues Cys68, Cys73, Cys79, Cys94, Cys98, Cys101, and Ser308 each coordinate [4Fe-4S] cluster. The 218-residue stretch at Phe80–Thr297 folds into the Radical SAM core domain.

It belongs to the radical SAM superfamily. Lipoyl synthase family. It depends on [4Fe-4S] cluster as a cofactor.

The protein localises to the cytoplasm. It carries out the reaction [[Fe-S] cluster scaffold protein carrying a second [4Fe-4S](2+) cluster] + N(6)-octanoyl-L-lysyl-[protein] + 2 oxidized [2Fe-2S]-[ferredoxin] + 2 S-adenosyl-L-methionine + 4 H(+) = [[Fe-S] cluster scaffold protein] + N(6)-[(R)-dihydrolipoyl]-L-lysyl-[protein] + 4 Fe(3+) + 2 hydrogen sulfide + 2 5'-deoxyadenosine + 2 L-methionine + 2 reduced [2Fe-2S]-[ferredoxin]. Its pathway is protein modification; protein lipoylation via endogenous pathway; protein N(6)-(lipoyl)lysine from octanoyl-[acyl-carrier-protein]: step 2/2. Catalyzes the radical-mediated insertion of two sulfur atoms into the C-6 and C-8 positions of the octanoyl moiety bound to the lipoyl domains of lipoate-dependent enzymes, thereby converting the octanoylated domains into lipoylated derivatives. This chain is Lipoyl synthase, found in Shewanella baltica (strain OS185).